A 527-amino-acid chain; its full sequence is MDKQLLPVLLLLLGVSGSWGQGEEPGGPSEVLPEEPTGEEVPKEDGILVLNHRTLSLALQEHSALMVEFYAPWCGHCKELAPEYSKAAALLAAESAVVTLAKVDGPAEPELTKEFEVVGYPTLKFFQNGNRTNPEEYAGPKTAEGIAEWLRRRVGPSATHLEDEEGVQALMAKWDMVVIGFFQDLQGKDMATFLALAKDALDMTFGFTDQPQLFEKFGLTKDTVVLFKKFDEGRADFPVDKETGLDLGDLSRFLVIHSMHLVTEFNSQTSPKIFAAKILNHLLLFVNQTLAQHRELLTDFREAAPPFRGQVLFVMVDVAADNSHVLNYFGLKAEEAPTLRLINVETTKKYAPTGVIAITAASVAAFCQAVLHGEIKHYLLSQEIPPDWDQGPVKTLVSKNFEQVAFDETKNVFVKFYAPWCSHCKEMAPAWEALAEKYKDREDIVIAELDATANELEAFSVLGYPTLKFFPAGPDRKVIDYKSTRDLETFSKFLDSGGHLPKEEPKEPAASAPEAQANSTLGPKEEL.

Positions 1 to 20 (MDKQLLPVLLLLLGVSGSWG) are cleaved as a signal peptide. The disordered stretch occupies residues 20 to 41 (GQGEEPGGPSEVLPEEPTGEEV). Positions 29–155 (SEVLPEEPTG…IAEWLRRRVG (127 aa)) constitute a Thioredoxin 1 domain. Catalysis depends on nucleophile residues C74 and C77. A disulfide bond links C74 and C77. N-linked (GlcNAc...) asparagine glycosylation is found at N130 and N287. Residues 355–499 (VIAITAASVA…FSKFLDSGGH (145 aa)) form the Thioredoxin 2 domain. Active-site nucleophile residues include C421 and C424. An intrachain disulfide couples C421 to C424. The disordered stretch occupies residues 495-527 (DSGGHLPKEEPKEPAASAPEAQANSTLGPKEEL). Residue N518 is glycosylated (N-linked (GlcNAc...) asparagine). Residues 524 to 527 (KEEL) carry the Prevents secretion from ER motif.

This sequence belongs to the protein disulfide isomerase family. Part of a large chaperone multiprotein complex comprising DNAJB11, HSP90B1, HSPA5, HYOU, PDIA2, PDIA4, PDIA6, PPIB, SDF2L1, UGGT1 and very small amounts of ERP29, but not, or at very low levels, CALR nor CANX. Post-translationally, glycosylated. In terms of tissue distribution, highly expressed in pancreas.

The protein localises to the endoplasmic reticulum lumen. The catalysed reaction is Catalyzes the rearrangement of -S-S- bonds in proteins.. Acts as an intracellular estrogen-binding protein. May be involved in modulating cellular levels and biological functions of estrogens in the pancreas. May act as a chaperone that inhibits aggregation of misfolded proteins. The sequence is that of Protein disulfide-isomerase A2 from Mus musculus (Mouse).